The primary structure comprises 127 residues: Probable toxin y4kH (127 aa).

This sequence belongs to the MbcT/ParT/Res family.

Functionally, probable toxic component of a type II toxin-antitoxin (TA) system. It is not known which gene encodes its antitoxin. This is Probable toxin y4kH from Sinorhizobium fredii (strain NBRC 101917 / NGR234).